The following is a 160-amino-acid chain: Large ribosomal subunit protein uL13 (160 aa).

Belongs to the universal ribosomal protein uL13 family. Part of the 50S ribosomal subunit.

This protein is one of the early assembly proteins of the 50S ribosomal subunit, although it is not seen to bind rRNA by itself. It is important during the early stages of 50S assembly. This chain is Large ribosomal subunit protein uL13, found in Orientia tsutsugamushi (strain Ikeda) (Rickettsia tsutsugamushi).